The following is a 271-amino-acid chain: Pyridoxine kinase (271 aa).

Asn141 serves as a coordination point for ATP. Residue Glu144 coordinates Mg(2+). Residues 178 to 182 (TGGGK), Asp190, Ile206, Gly215, and Lys240 each bind ATP.

Belongs to the ThiD family. As to quaternary structure, homodimer.

The enzyme catalyses pyridoxal + ATP = pyridoxal 5'-phosphate + ADP + H(+). In terms of biological role, phosphorylates B6 vitamers; functions in a salvage pathway. Uses pyridoxal, pyridoxine, and pyridoxamine as substrates. Can also use hydroxymethylpyrimidine (HMP) as substrate. The sequence is that of Pyridoxine kinase (pdxK) from Bacillus subtilis (strain 168).